Reading from the N-terminus, the 165-residue chain is PTS system glucose-specific EIIA component (165 aa).

The PTS EIIA type-1 domain occupies 33–137; that stretch reads DPVFAGRMMG…STITPIVITN (105 aa). Positions 70 and 85 each coordinate Zn(2+). The Tele-phosphohistidine intermediate; for EIIA activity role is filled by H85. Phosphohistidine; by HPr is present on H85.

As to quaternary structure, heterodimer with glycerol kinase (glpk). It depends on Zn(2+) as a cofactor.

It is found in the cytoplasm. Its function is as follows. The phosphoenolpyruvate-dependent sugar phosphotransferase system (sugar PTS), a major carbohydrate active transport system, catalyzes the phosphorylation of incoming sugar substrates concomitantly with their translocation across the cell membrane. The enzyme II complex composed of PtsG and Crr is involved in glucose transport. The protein is PTS system glucose-specific EIIA component (crr) of Bacillus cereus (strain ATCC 14579 / DSM 31 / CCUG 7414 / JCM 2152 / NBRC 15305 / NCIMB 9373 / NCTC 2599 / NRRL B-3711).